Consider the following 393-residue polypeptide: Phosphopentomutase (393 aa).

Residues Asp-15, Asp-288, His-293, Asp-329, His-330, and His-341 each contribute to the Mn(2+) site.

Belongs to the phosphopentomutase family. Mn(2+) serves as cofactor.

It is found in the cytoplasm. It carries out the reaction 2-deoxy-alpha-D-ribose 1-phosphate = 2-deoxy-D-ribose 5-phosphate. The enzyme catalyses alpha-D-ribose 1-phosphate = D-ribose 5-phosphate. It functions in the pathway carbohydrate degradation; 2-deoxy-D-ribose 1-phosphate degradation; D-glyceraldehyde 3-phosphate and acetaldehyde from 2-deoxy-alpha-D-ribose 1-phosphate: step 1/2. Its function is as follows. Isomerase that catalyzes the conversion of deoxy-ribose 1-phosphate (dRib-1-P) and ribose 1-phosphate (Rib-1-P) to deoxy-ribose 5-phosphate (dRib-5-P) and ribose 5-phosphate (Rib-5-P), respectively. The sequence is that of Phosphopentomutase from Halalkalibacterium halodurans (strain ATCC BAA-125 / DSM 18197 / FERM 7344 / JCM 9153 / C-125) (Bacillus halodurans).